We begin with the raw amino-acid sequence, 71 residues long: Peptide Ctri9819 (71 aa).

A signal peptide spans 1-23; it reads MKTVSTVAILAIFLLIVITTIET. Residue L34 is modified to Leucine amide. A propeptide spanning residues 38 to 71 is cleaved from the precursor; that stretch reads SKLETFKRIARTLSAGISAKRSLEDVNSLTGMSS.

Belongs to the non-disulfide-bridged peptide (NDBP) superfamily. Short antimicrobial peptide (group 4) family. In terms of tissue distribution, expressed by the venom gland.

It localises to the secreted. Its function is as follows. Antimicrobial peptide. The sequence is that of Peptide Ctri9819 from Chaerilus tricostatus (Scorpion).